Consider the following 110-residue polypeptide: UPF0122 protein Sca_0859 (110 aa).

It belongs to the UPF0122 family.

Its function is as follows. Might take part in the signal recognition particle (SRP) pathway. This is inferred from the conservation of its genetic proximity to ftsY/ffh. May be a regulatory protein. In Staphylococcus carnosus (strain TM300), this protein is UPF0122 protein Sca_0859.